Here is a 193-residue protein sequence, read N- to C-terminus: Acyl-homoserine-lactone synthase (193 aa).

It belongs to the autoinducer synthase family.

It carries out the reaction a fatty acyl-[ACP] + S-adenosyl-L-methionine = an N-acyl-L-homoserine lactone + S-methyl-5'-thioadenosine + holo-[ACP] + H(+). Required for the synthesis of N-(3-oxodecanoyl)-L-homoserine lactone (ODHL), an autoinducer molecule which binds to VanR. This Vibrio anguillarum (Listonella anguillarum) protein is Acyl-homoserine-lactone synthase (vanI).